The chain runs to 657 residues: Replication restart protein PriA (657 aa).

The Helicase ATP-binding domain occupies 143-309; the sequence is ITASTGARSF…LRGAVRRLPL (167 aa). Residue 156 to 163 participates in ATP binding; the sequence is GVTGSGKT. The short motif at 252-255 is the DEAH box element; the sequence is DEEH. The Zn(2+) site is built by cysteine 366, cysteine 369, cysteine 375, cysteine 378, cysteine 393, cysteine 396, cysteine 406, and cysteine 409. In terms of domain architecture, Helicase C-terminal spans 390–570; it reads AMQCHYCGRQ…PFVRLIRFVF (181 aa).

Belongs to the helicase family. PriA subfamily. Component of the replication restart primosome. Requires Zn(2+) as cofactor.

The enzyme catalyses Couples ATP hydrolysis with the unwinding of duplex DNA by translocating in the 3'-5' direction.. It catalyses the reaction ATP + H2O = ADP + phosphate + H(+). Its function is as follows. Initiates the restart of stalled replication forks, which reloads the replicative helicase on sites other than the origin of replication. Recognizes and binds to abandoned replication forks and remodels them to uncover a helicase loading site. Promotes assembly of the primosome at these replication forks. The protein is Replication restart protein PriA of Treponema pallidum (strain Nichols).